The sequence spans 278 residues: Potassium/proton antiporter CemA (278 aa).

4 helical membrane passes run 60 to 80 (YLVL…SLVF), 163 to 183 (ILAF…IAVL), 201 to 221 (FLII…GWEV), and 239 to 259 (IFLF…YWIF).

Belongs to the CemA family.

The protein localises to the plastid. The protein resides in the chloroplast inner membrane. The catalysed reaction is K(+)(in) + H(+)(out) = K(+)(out) + H(+)(in). In terms of biological role, contributes to K(+)/H(+) antiport activity by supporting proton efflux to control proton extrusion and homeostasis in chloroplasts in a light-dependent manner to modulate photosynthesis. Prevents excessive induction of non-photochemical quenching (NPQ) under continuous-light conditions. Indirectly promotes efficient inorganic carbon uptake into chloroplasts. The polypeptide is Potassium/proton antiporter CemA (Guillardia theta (Cryptophyte)).